The following is a 154-amino-acid chain: Ribosomal RNA large subunit methyltransferase H (154 aa).

Residues Leu-70, Gly-102, and 121-126 contribute to the S-adenosyl-L-methionine site; that span reads LSRMTL.

This sequence belongs to the RNA methyltransferase RlmH family. In terms of assembly, homodimer.

The protein resides in the cytoplasm. It catalyses the reaction pseudouridine(1915) in 23S rRNA + S-adenosyl-L-methionine = N(3)-methylpseudouridine(1915) in 23S rRNA + S-adenosyl-L-homocysteine + H(+). Specifically methylates the pseudouridine at position 1915 (m3Psi1915) in 23S rRNA. The protein is Ribosomal RNA large subunit methyltransferase H of Geobacter sp. (strain M21).